The primary structure comprises 171 residues: uncharacterized protein (171 aa).

The protein belongs to the transferase hexapeptide repeat family.

This is an uncharacterized protein from Bacillus subtilis (strain 168).